We begin with the raw amino-acid sequence, 339 residues long: MAQYKGAASEAGRAMHLMKKREKQREQMEQMKQRIAEENIMKSNIDKKFSAHYDAVEAELKSSTVGLVTLNDMKAKQEALVKEREKQLAKKEQSKELQLKLEKLREKERKKEAKRKISSLSFTLEEEEEGVEEEEEMAMYEEELEREEITTKKKKLGKNPDVDTSFLPDRDREEEENRLREELRQEWEAKQEKIKSEEIEITFSYWDGSGHRRTVKMKKGNTMQQFLQKALEILRKDFSELRSAGVEQLMYIKEDLIIPHHHSFYDFIVTKARGKSGPLFNFDVHDDVRLLSDATVEKDESHAGKVVLRSWYEKNKHIFPASRWEPYDPEKKWDKYTIR.

Residues 1–31 (MAQYKGAASEAGRAMHLMKKREKQREQMEQM) are disordered. Alanine 2 carries the N-acetylalanine modification. Residue lysine 100 forms a Glycyl lysine isopeptide (Lys-Gly) (interchain with G-Cter in SUMO2) linkage. Residues 150-177 (TTKKKKLGKNPDVDTSFLPDRDREEEEN) form a disordered region. Positions 152 to 155 (KKKK) match the Nuclear localization signal motif. The segment covering 168 to 177 (PDRDREEEEN) has biased composition (basic and acidic residues).

This sequence belongs to the FAM50 family. Interacts with EFTUD2, a component of the spliceosome U5 complex. Interacts with DDX41, a component of the spliceosome C complex. In terms of tissue distribution, widely expressed in embryonic and adult tissues.

The protein localises to the nucleus. Its function is as follows. Probably involved in the regulation of pre-mRNA splicing. The polypeptide is Protein FAM50A (Fam50a) (Mus musculus (Mouse)).